The chain runs to 273 residues: HTH-type transcriptional regulator NimR (273 aa).

An HTH araC/xylS-type domain is found at 158–258 (PKIRTMVEMM…GQTPGRYIAR (101 aa)). 2 consecutive DNA-binding regions (H-T-H motif) follow at residues 178–199 (GQWA…VKET) and 225–248 (VQKV…KKGL).

Functionally, negatively regulates expression of the nimT operon and its own expression. Acts by binding to the nimR-nimT intergenic region. This chain is HTH-type transcriptional regulator NimR, found in Escherichia coli (strain K12).